The chain runs to 72 residues: Large ribosomal subunit protein uL29 (72 aa).

Belongs to the universal ribosomal protein uL29 family.

This is Large ribosomal subunit protein uL29 (rpmC) from Chlamydia muridarum (strain MoPn / Nigg).